We begin with the raw amino-acid sequence, 199 residues long: Recombination protein RecR (199 aa).

The C4-type zinc finger occupies 57 to 72 (CSICGNFTDRDPCRLC). One can recognise a Toprim domain in the interval 80–175 (SCICVVEEAR…KVTRLAYGLP (96 aa)).

Belongs to the RecR family.

Its function is as follows. May play a role in DNA repair. It seems to be involved in an RecBC-independent recombinational process of DNA repair. It may act with RecF and RecO. The protein is Recombination protein RecR of Moorella thermoacetica (strain ATCC 39073 / JCM 9320).